The chain runs to 616 residues: 2-isopropylmalate synthase (616 aa).

A disordered region spans residues 1–34 (MSPNDAFISAPAKIETPVGPRNEGQPAWNKQRGS). The region spanning 67 to 341 (PQWCAVDLRD…DPQLDFTDIR (275 aa)) is the Pyruvate carboxyltransferase domain. The Mg(2+) site is built by aspartate 76, histidine 280, histidine 282, and asparagine 316. The tract at residues 490–616 (RTAPVEQIAL…NHEAVLAGGV (127 aa)) is regulatory domain.

Belongs to the alpha-IPM synthase/homocitrate synthase family. LeuA type 2 subfamily. Homodimer. It depends on Mg(2+) as a cofactor.

Its subcellular location is the cytoplasm. The enzyme catalyses 3-methyl-2-oxobutanoate + acetyl-CoA + H2O = (2S)-2-isopropylmalate + CoA + H(+). Its pathway is amino-acid biosynthesis; L-leucine biosynthesis; L-leucine from 3-methyl-2-oxobutanoate: step 1/4. In terms of biological role, catalyzes the condensation of the acetyl group of acetyl-CoA with 3-methyl-2-oxobutanoate (2-ketoisovalerate) to form 3-carboxy-3-hydroxy-4-methylpentanoate (2-isopropylmalate). This Corynebacterium glutamicum (strain R) protein is 2-isopropylmalate synthase.